A 79-amino-acid chain; its full sequence is Morintide mO1 (79 aa).

The signal sequence occupies residues 1 to 20 (MAKLSFLSLFLLCLVATATA). The Chitin-binding type-1 domain maps to 21–63 (QNCGRQAGNRACANQLCCSQYGFCGSTSEYCSRANGCQSNCRG). 4 disulfide bridges follow: cysteine 23-cysteine 38, cysteine 32-cysteine 44, cysteine 37-cysteine 51, and cysteine 57-cysteine 61. Positions 64–79 (GGGADGAGGEAGGGGP) are excised as a propeptide.

As to expression, leaves (at protein level).

Its function is as follows. Chitin-binding protein which functions in defense against chitin-containing fungal pathogens. Inhibits the growth of budding hyphae in A.alternata and A.brassiciola. The sequence is that of Morintide mO1 from Moringa oleifera (Horseradish tree).